The chain runs to 309 residues: Eugenol synthase 2 (309 aa).

Residues 13–16, 35–45, R36, 86–88, 111–113, K134, and 154–156 contribute to the NADP(+) site; these read TGYI, VRETTVSDPVK, FMQ, SEF, and NCF. K134 serves as the catalytic Proton donor/acceptor.

This sequence belongs to the NmrA-type oxidoreductase family. Mostly expressed in petals, and, to a lower extent, in sepals, stamens and pistils.

It carries out the reaction eugenol + a carboxylate + NADP(+) = a coniferyl ester + NADPH. The enzyme catalyses eugenol + acetate + NADP(+) = (E)-coniferyl acetate + NADPH. Its pathway is aromatic compound metabolism; phenylpropanoid biosynthesis. Catalyzes the synthesis of the phenylpropene eugenol from coniferyl acetate. Phenylpropenes are produced by plants as defense compounds with antimicrobial and antianimal properties, or as floral attractants of pollinators. The sequence is that of Eugenol synthase 2 from Clarkia breweri (Fairy fans).